The sequence spans 599 residues: Probable acetolactate synthase large subunit (599 aa).

Residue Glu47 coordinates thiamine diphosphate. Residues Arg149, 258–279 (HGTK…IGCR), and 301–320 (DIDP…IVGD) each bind FAD. The tract at residues 404-484 (QNQMWMAHYF…VVICIFDNRT (81 aa)) is thiamine pyrophosphate binding. Residues Asp455 and Asn482 each coordinate Mg(2+).

The protein belongs to the TPP enzyme family. As to quaternary structure, dimer of large and small chains. Mg(2+) is required as a cofactor. The cofactor is thiamine diphosphate.

It carries out the reaction 2 pyruvate + H(+) = (2S)-2-acetolactate + CO2. Its pathway is amino-acid biosynthesis; L-isoleucine biosynthesis; L-isoleucine from 2-oxobutanoate: step 1/4. It functions in the pathway amino-acid biosynthesis; L-valine biosynthesis; L-valine from pyruvate: step 1/4. The chain is Probable acetolactate synthase large subunit (ilvB) from Methanococcus aeolicus.